The following is a 952-amino-acid chain: Probable mixed-linked glucan synthase 6 (952 aa).

The next 2 membrane-spanning stretches (helical) occupy residues 102 to 122 (LLHPYRVLIFVRLIAFTLFVI) and 132 to 152 (AMWLWVTSIAGEFWFGFSWLL). D227 is a catalytic residue. A coiled-coil region spans residues 278–308 (EEFVNDRRRVRKEYDDFKARINGLEHDIKQR). Residues D429 and D431 each coordinate substrate. Residue D636 is part of the active site. The next 6 membrane-spanning stretches (helical) occupy residues 718-738 (LFLIFYTTVPALSFVTGHFIV), 744-764 (MFYVYLAIVLGTLLILAVLEV), 782-802 (MTASCSAYLAAVLQVVTKVVF), 834-854 (WLMITPIIIILVNIIGSAVAF), 865-885 (WLKVAGGVFFNFWVLFHLYPF), and 898-918 (VVVLVWWAFTFVITAVLYINI).

This sequence belongs to the glycosyltransferase 2 family. Plant cellulose synthase-like F subfamily.

Its subcellular location is the golgi apparatus membrane. Its function is as follows. May catalyze both beta-1,3 and beta-1,4 glycosidic linkage on beta-D-glucan. Essential for (1,3;1,4)-beta-D-glucans synthesis in grasses and cereals (Poaceae). The mixed-linked glucans (which are not present in walls of dicotyledons or most other monocotyledonous plants) are particularly important constituents of the walls of the starchy endosperm and aleurone cells of cereal grains such as oats, wheat, rice and barley. They can account for up to 70% by weight of the wall. The polypeptide is Probable mixed-linked glucan synthase 6 (CSLF6) (Oryza sativa subsp. japonica (Rice)).